An 80-amino-acid chain; its full sequence is Putative membrane protein insertion efficiency factor (80 aa).

Residues 61–80 (KTGKDPVPDHFSLKRNQEGE) are disordered. The span at 62–80 (TGKDPVPDHFSLKRNQEGE) shows a compositional bias: basic and acidic residues.

This sequence belongs to the UPF0161 family.

It is found in the cell membrane. Could be involved in insertion of integral membrane proteins into the membrane. The polypeptide is Putative membrane protein insertion efficiency factor (Streptococcus pneumoniae (strain 70585)).